We begin with the raw amino-acid sequence, 75 residues long: CLAVATA3/ESR (CLE)-related protein 2 (75 aa).

An N-terminal signal peptide occupies residues 1 to 22 (MAKLSFTFCFLLFLLLSSIAAG). Residues 40-75 (PSIEATSPTVEDDQAAGSHGKSPERLSPGGPDPQHH) form a disordered region. Proline 67 and proline 70 each carry hydroxyproline. An O-linked (Ara...) hydroxyproline glycan is attached at proline 70.

The protein belongs to the CLV3/ESR signal peptide family. As to quaternary structure, interacts with the extracellular leucine-rich repeat region of CLV1. In terms of processing, the O-glycosylation (arabinosylation) of the hydroxyproline Pro-70 enhances binding affinity of the CLE2p peptide for its receptor. Mostly expressed in roots and seedlings, and, to a lower extent, in apex.

The protein resides in the secreted. The protein localises to the extracellular space. Its function is as follows. Extracellular signal peptide that regulates cell fate. May act with CLV1 as a ligand-receptor pair in a signal transduction pathway, coordinating growth between adjacent meristematic regions. This chain is CLAVATA3/ESR (CLE)-related protein 2, found in Arabidopsis thaliana (Mouse-ear cress).